The following is a 76-amino-acid chain: Small ribosomal subunit protein bS18 (76 aa).

This sequence belongs to the bacterial ribosomal protein bS18 family. Part of the 30S ribosomal subunit. Forms a tight heterodimer with protein bS6.

Its function is as follows. Binds as a heterodimer with protein bS6 to the central domain of the 16S rRNA, where it helps stabilize the platform of the 30S subunit. The chain is Small ribosomal subunit protein bS18 from Marinomonas sp. (strain MWYL1).